An 862-amino-acid polypeptide reads, in one-letter code: Glucans biosynthesis glucosyltransferase H (862 aa).

The disordered stretch occupies residues 1-25 (MELPATSGLNAQPGNAEGTTASTRP). Residues 7–25 (SGLNAQPGNAEGTTASTRP) show a composition bias toward polar residues. The next 5 helical transmembrane spans lie at 188–210 (RLTLLALMIAQTVAATWAMSSVL), 545–567 (GVMAYLSAPLWFLFLLLSTALLA), 597–619 (ALFSATATVLFLPKILSVLVLWA), 626–648 (GGAVHLALSMVIEAVFSVLAAPV), and 708–730 (FLWWLSPVVGALIVSILLSVFSS).

It belongs to the glycosyltransferase 2 family. OpgH subfamily.

The protein resides in the cell inner membrane. The protein operates within glycan metabolism; osmoregulated periplasmic glucan (OPG) biosynthesis. Functionally, involved in the biosynthesis of osmoregulated periplasmic glucans (OPGs). This is Glucans biosynthesis glucosyltransferase H from Ralstonia nicotianae (strain ATCC BAA-1114 / GMI1000) (Ralstonia solanacearum).